The chain runs to 704 residues: Polyribonucleotide nucleotidyltransferase 4 (704 aa).

2 residues coordinate Mg(2+): Asp-483 and Asp-489. The KH domain maps to 550 to 609; the sequence is PRVLKMKIHPDKIRDVIGSGGKTINRIIDETGVKIDIDNDGTIFIAAESQEAVEKAIIII. The S1 motif domain maps to 619–687; the sequence is GQNYTGKVIK…QQGKINLSRK (69 aa).

This sequence belongs to the polyribonucleotide nucleotidyltransferase family. Mg(2+) is required as a cofactor.

It localises to the cytoplasm. The enzyme catalyses RNA(n+1) + phosphate = RNA(n) + a ribonucleoside 5'-diphosphate. Involved in mRNA degradation. Catalyzes the phosphorolysis of single-stranded polyribonucleotides processively in the 3'- to 5'-direction. This Alkaliphilus metalliredigens (strain QYMF) protein is Polyribonucleotide nucleotidyltransferase 4.